The following is a 354-amino-acid chain: MGSGISAEDKELARRSKELEKKLQEDADKEAKTVKLLLLGAGESGKSTIVKQMKIIHQDGYSPEECLEFKSVIYGNVLQSILAIIRAMSTLGIDYAEPSCADAGRQLNNLADSTEEGTMPPELVDVIRKLWKDGGVQACFDRAAEFQLNDSASYYLNQLDRITDPNYLPNEQDVLRSRVKTTGIIETKFSVKDLNFRMFDVGGQRSERKKWIHCFEGVTCIIFCAALSAYDMVLVEDDEVNRMHESLHLFNSICNHKFFAATSIVLFLNKKDLFEEKIKKVHLSICFPEYDGNNSYEDAGNYIKSQFLDLNMRKDVKEIYSHMTCATDTQNVKFVFDAVTDIIIKENLKDCGLF.

Residues 1–28 (MGSGISAEDKELARRSKELEKKLQEDAD) form a disordered region. Residue Gly-2 is the site of N-myristoyl glycine attachment. The span at 7-28 (AEDKELARRSKELEKKLQEDAD) shows a compositional bias: basic and acidic residues. Residues 32-354 (KTVKLLLLGA…KENLKDCGLF (323 aa)) enclose the G-alpha domain. The interval 35–48 (KLLLLGAGESGKST) is G1 motif. GTP contacts are provided by residues 40–47 (GAGESGKS), 175–181 (LRSRVKT), 200–204 (DVGGQ), 269–272 (NKKD), and Ala-326. Residues Ser-47 and Thr-181 each coordinate Mg(2+). The segment at 173-181 (DVLRSRVKT) is G2 motif. A G3 motif region spans residues 196–205 (FRMFDVGGQR). A G4 motif region spans residues 265 to 272 (VLFLNKKD). The segment at 324–329 (TCATDT) is G5 motif.

Belongs to the G-alpha family. G(i/o/t/z) subfamily. As to quaternary structure, g proteins are composed of 3 units; alpha, beta and gamma. The alpha chain contains the guanine nucleotide binding site. In the retina, expressed in the rod photoreceptors.

It localises to the cell projection. It is found in the cilium. Its subcellular location is the photoreceptor outer segment. The protein localises to the photoreceptor inner segment. Its function is as follows. Guanine nucleotide-binding proteins (G proteins) are involved as modulators or transducers in various transmembrane signaling systems. Transducin is an amplifier and one of the transducers of a visual impulse that performs the coupling between rhodopsin and cGMP-phosphodiesterase. The chain is Guanine nucleotide-binding protein G(t) subunit alpha-2 (Gnat2) from Mus musculus (Mouse).